A 655-amino-acid chain; its full sequence is Kelch-like protein 13 (655 aa).

The region spanning Cys-92 to Met-161 is the BTB domain. Residues Cys-196–Gln-297 form the BACK domain. Kelch repeat units lie at residues His-341–Asn-389, Phe-390–Gly-441, Tyr-442–Gly-488, Met-490–Glu-535, Leu-537–Asn-587, and Lys-588–Val-636.

Component of the BCR(KLHL9-KLHL13) E3 ubiquitin ligase complex, at least composed of CUL3, KLHL9, KLHL13 and RBX1. Interacts with AURKB.

It functions in the pathway protein modification; protein ubiquitination. Functionally, substrate-specific adapter of a BCR (BTB-CUL3-RBX1) E3 ubiquitin-protein ligase complex required for mitotic progression and cytokinesis. The BCR(KLHL9-KLHL13) E3 ubiquitin ligase complex mediates the ubiquitination of AURKB and controls the dynamic behavior of AURKB on mitotic chromosomes and thereby coordinates faithful mitotic progression and completion of cytokinesis. In Bos taurus (Bovine), this protein is Kelch-like protein 13 (KLHL13).